Reading from the N-terminus, the 584-residue chain is MAAAVAPLSPQPRGAAASAALSPTRISRLQEKEELRQLNDRLAVYIDKVRSLETENSALQRRVSEREQVCGREISGLKELFETELADARKTLDDTARERAKLQIELGKLRAEHEQVLSSYAKKDSDLNAAQVKLREFEAALNAKEAALATALGDKRSQEEELEDLRDQIAQLEVSLAAAKKELADETLQKVDLENRCQSLIEDLEFRKNVYEEEIKETRRKHETRLVEVDSGRQIEYEYKLAQALKEIREQHDAQVKLYKEELEQTYSSKLENIRQSSEMHSCTANTVREELHESRMRIETLSSHIADIQKESRAWQDRVHELEDTLSKERENYRKILAENEREVAEMRNQMQQQFSDYEQLLDVKLALDMEISAYRKLLESEEERLRLSPGPSSRVTVSRASSSRSVRTTRGKRKRIDVEESEASSSVSISHSASATGNISIEEIDVDGKFIRLKNTSEQDQPMGGWEMIRKIGDTSASYRYTSRYVLKAGQTVTIWAANAGVTASPPTDLIWKNQNSWGTGEDVKVVLKNSQGEEVAQRSTVFKTTVNEGEEEEEEGEEEILEDVIHQQGSPRKPERSCVVM.

A disordered region spans residues 1–22 (MAAAVAPLSPQPRGAAASAALS). A head region spans residues 2-33 (AAAVAPLSPQPRGAAASAALSPTRISRLQEKE). Ser-22 carries the phosphoserine modification. Residues 31-387 (EKEELRQLND…KLLESEEERL (357 aa)) enclose the IF rod domain. The tract at residues 34-70 (ELRQLNDRLAVYIDKVRSLETENSALQRRVSEREQVC) is coil 1A. A coil 1B region spans residues 81-218 (FETELADARK…NVYEEEIKET (138 aa)). The interval 243–385 (QALKEIREQH…YRKLLESEEE (143 aa)) is coil 2. Residues 386–584 (RLRLSPGPSS…RKPERSCVVM (199 aa)) are tail. 2 disordered regions span residues 388–431 (RLSP…SVSI) and 548–584 (TVNEGEEEEEEGEEEILEDVIHQQGSPRKPERSCVVM). The segment covering 394 to 408 (SSRVTVSRASSSRSV) has biased composition (low complexity). The Nuclear localization signal signature appears at 414-419 (KRKRID). One can recognise an LTD domain in the interval 429–545 (VSISHSASAT…EEVAQRSTVF (117 aa)). The segment covering 551–565 (EGEEEEEEGEEEILE) has biased composition (acidic residues). Residues 575–584 (RKPERSCVVM) show a composition bias toward basic and acidic residues. The residue at position 581 (Cys-581) is a Cysteine methyl ester. The S-farnesyl cysteine moiety is linked to residue Cys-581. Residues 582-584 (VVM) constitute a propeptide, removed in mature form.

It belongs to the intermediate filament family. In terms of assembly, homodimer. Lamin dimers then assemble into dimeric head-to-tail polymers. Ultimately, two head-to-tail polymers assemble laterally into a protofilament with a uniformly shaped rod of 3.5 nm in diameter. Post-translationally, phosphorylation plays a key role in lamin organization, subcellular localization and nuclear envelope disintegration. Phosphorylation by CDK1 at Ser-22 at the onset of mitosis drives lamin disassembly and nuclear envelope breakdown.

The protein localises to the nucleus lamina. Its subcellular location is the nucleus envelope. It localises to the nucleus. The protein resides in the nucleoplasm. It is found in the nucleus matrix. Functionally, lamins are intermediate filament proteins that assemble into a filamentous meshwork, and which constitute the major components of the nuclear lamina, a fibrous layer on the nucleoplasmic side of the inner nuclear membrane. Lamins provide a framework for the nuclear envelope, bridging the nuclear envelope and chromatin. Plays an important role in nuclear assembly, chromatin organization, nuclear membrane and telomere dynamics. The protein is Lamin-B1 (LMNB1) of Gallus gallus (Chicken).